A 297-amino-acid chain; its full sequence is SWIRM domain-containing protein laf1 (297 aa).

Disordered stretches follow at residues 50–70 (PKCS…KPTA) and 109–173 (STPA…EFSS). The span at 159 to 173 (QHNTRFKQSSREFSS) shows a compositional bias: polar residues. An SWIRM domain is found at 207 to 297 (LRSEWKGPPL…AFHDEGFFDD (91 aa)).

As to quaternary structure, component of the RPD3C(L) complex.

The protein resides in the nucleus. Its function is as follows. Component of the RPD3C(L) histone deacetylase complex (HDAC) responsible for the deacetylation of lysine residues on the N-terminal part of the core histones (H2A, H2B, H3 and H4). Histone deacetylation gives a tag for epigenetic repression and plays an important role in transcriptional regulation, cell cycle progression and developmental events. This is SWIRM domain-containing protein laf1 (laf1) from Schizosaccharomyces pombe (strain 972 / ATCC 24843) (Fission yeast).